The sequence spans 458 residues: MIFYEIFQVSFYQNFLWEKSVRLLFKVQRRLFKVSYIHDKKNLYELQKLIFQSNCARLLAIREVTQLSFNKKISGVDGKTTLNFLERFELNEYLRKNWNNWKPQSLRKRCVFDLNENLISDTISTISDRSWQVLIKFALEPVHEAFFHPFNFGFRYNVPIYKVQQAILLNLSNISFGSKKRILKVELNCNFSIFNYDYLMKKLIAPRNIKLGIFRLLELGFNLHFPENECQISTFSSLLLNVMLNGVENVHNCVRYGYYMLFFLRPMDNEKILANQILSLLYTRGIKKNSSKFLLVSNTKGFDFLGWHFKFSEKVKNGISAIPSLNNYQFFLNRVKRIVNNSNYGSVVKASKLYPVIKNWREYHKYSDLRSLSYSLFFVKKHAFSAFNSESKQDFYSSKRLLFKSFLVSESFNTVSKKYNFHILNCFSFGHLTFLSESINFFNKINLYFCVHCGMKCI.

It to group II intron maturases.

The protein resides in the plastid. Its subcellular location is the chloroplast. Could be required for group III intron excision. This Euglena gracilis protein is Maturase-like protein 1 (mat1).